The sequence spans 692 residues: DNA topoisomerase 4 subunit B (692 aa).

Residues Y53, N93, D120, 162–168, and K393 each bind ATP; that span reads GLHGVGI. In terms of domain architecture, Toprim spans 473–587; sequence AELFIVEGDS…AGHLYLAVPP (115 aa). Residues E479, D552, and D554 each contribute to the Mg(2+) site.

This sequence belongs to the type II topoisomerase family. ParE type 1 subfamily. As to quaternary structure, heterotetramer composed of ParC and ParE. Mg(2+) is required as a cofactor. It depends on Mn(2+) as a cofactor. Requires Ca(2+) as cofactor.

It catalyses the reaction ATP-dependent breakage, passage and rejoining of double-stranded DNA.. Its function is as follows. Topoisomerase IV is essential for chromosome segregation. It relaxes supercoiled DNA. Performs the decatenation events required during the replication of a circular DNA molecule. In Bartonella bacilliformis (strain ATCC 35685 / KC583 / Herrer 020/F12,63), this protein is DNA topoisomerase 4 subunit B.